Here is a 622-residue protein sequence, read N- to C-terminus: Gamma tubulin complex adapter SPC72 (622 aa).

2 disordered regions span residues 1–58 (MVRR…PALM) and 221–263 (DKEE…IHDS). Over residues 228-238 (LAQSSPAGSQL) the composition is skewed to polar residues. Positions 239–250 (ESRDSPSSKEEN) are enriched in basic and acidic residues.

As to quaternary structure, homooligomer. Interacts with CDC5, KAR1, KIN4, SPC97, SPC98, STU2 and TUB4. Post-translationally, phosphorylated by CDC5.

The protein localises to the cytoplasm. It localises to the cytoskeleton. It is found in the microtubule organizing center. The protein resides in the spindle pole body. In terms of biological role, spindle pole body (SPB) component that acts as the gamma-tubulin complex-binding protein of the SPB outer plaque. Anchors cytoplasmic microtubules at the half bridge of the spindle pole body (SPB) and accordingly functions in nuclear position and spindle orientation, including anaphase spindle migration into the bud. Recruits KIN4 kinase to both SPBs when cytoplasmic microtubules are defective, to delay mitotic exit. Links cytoplasmic microtubules with spindle orientation checkpoint (SPOC) components and, therefore, could function as part of the sensors of spindle orientation defects. Required for cytoplasmic astral microtubule growth during mitosis. Is strictly required for mating and karyogamy. This chain is Gamma tubulin complex adapter SPC72 (SPC72), found in Saccharomyces cerevisiae (strain ATCC 204508 / S288c) (Baker's yeast).